Reading from the N-terminus, the 1393-residue chain is ABC transporter G family member 3 (1393 aa).

Over residues 1–14 (MEDKNNIELQEKAP) the composition is skewed to basic and acidic residues. The disordered stretch occupies residues 1 to 68 (MEDKNNIELQ…IIYQNPTPAS (68 aa)). Over residues 15–50 (DNYNNNNNNNNNNNNNNNNNNNNNNNNNNNNNNDIN) the composition is skewed to low complexity. The ABC transporter 1 domain maps to 100-353 (VSANNISYYI…YFSSIGLAPL (254 aa)). 144 to 151 (GIPGAGKS) contributes to the ATP binding site. Residues 473 to 698 (MQYAVRFFQA…SYADGGYQGN (226 aa)) form the ABC transmembrane type-2 1 domain. Transmembrane regions (helical) follow at residues 479-499 (FFQAIFMGCVIGSLFVKMGFT), 509-529 (LVYFAMVLHIWTTIGSVEEFF), 558-578 (IPISLIEAILFSSCCYWIAGF), 585-605 (FIVFILGMALTNLIAQGIFQV), 615-635 (LASLICPAIVVLFMIMSGYMI), 640-660 (IPGWWIWLNALSPLRYVIDMV), and 724-744 (VDIVIILGFVCTFFFIFFLGV). One can recognise an ABC transporter 2 domain in the interval 783-1035 (MTFQNLNYVV…VIQHFTSAGY (253 aa)). Residue 828–835 (GPSGAGKS) participates in ATP binding. An ABC transmembrane type-2 2 domain is found at 1121–1388 (QTILLRFLRS…FLGYLALRFI (268 aa)). The next 6 membrane-spanning stretches (helical) occupy residues 1122 to 1142 (TILLRFLRSFIPAIVIGTLFL), 1157 to 1177 (LVFLGFLFGGMASIGKVPTIV), 1206 to 1226 (LPMMVLTAFSYWIPMFFLTGL), 1235 to 1255 (FFFSLSVYLLVIMCYDSLATL), 1265 to 1285 (IAILVSGVGLNFLGLFGGFFI), and 1364 to 1384 (FYNLIILGGYFCAYTFLGYLA).

This sequence belongs to the ABC transporter superfamily. ABCG family. PDR (TC 3.A.1.205) subfamily.

It is found in the membrane. This chain is ABC transporter G family member 3 (abcG3), found in Dictyostelium discoideum (Social amoeba).